The sequence spans 259 residues: Dihydroorotate dehydrogenase B (NAD(+)), electron transfer subunit (259 aa).

An FAD-binding FR-type domain is found at 2-102 (MQKQNMIVVN…LGPLGHGFPV (101 aa)). FAD is bound by residues 53–56 (RPIS), 70–72 (LYR), and 77–78 (GT). 4 residues coordinate [2Fe-2S] cluster: Cys-221, Cys-226, Cys-229, and Cys-246.

It belongs to the PyrK family. Heterotetramer of 2 PyrK and 2 PyrD type B subunits. [2Fe-2S] cluster serves as cofactor. It depends on FAD as a cofactor.

It functions in the pathway pyrimidine metabolism; UMP biosynthesis via de novo pathway; orotate from (S)-dihydroorotate (NAD(+) route): step 1/1. Responsible for channeling the electrons from the oxidation of dihydroorotate from the FMN redox center in the PyrD type B subunit to the ultimate electron acceptor NAD(+). The polypeptide is Dihydroorotate dehydrogenase B (NAD(+)), electron transfer subunit (Bacillus cereus (strain ZK / E33L)).